The primary structure comprises 201 residues: Urease accessory protein UreG (201 aa).

11 to 18 is a binding site for GTP; sequence GPVGSGKT.

The protein belongs to the SIMIBI class G3E GTPase family. UreG subfamily. In terms of assembly, homodimer. UreD, UreF and UreG form a complex that acts as a GTP-hydrolysis-dependent molecular chaperone, activating the urease apoprotein by helping to assemble the nickel containing metallocenter of UreC. The UreE protein probably delivers the nickel.

It is found in the cytoplasm. In terms of biological role, facilitates the functional incorporation of the urease nickel metallocenter. This process requires GTP hydrolysis, probably effectuated by UreG. The sequence is that of Urease accessory protein UreG from Synechococcus sp. (strain CC9605).